A 1156-amino-acid polypeptide reads, in one-letter code: MEKRAYIEKIVVEGFKSYGTKRKEIPLGEGFIAVVGPNGAGKSNIGDAISFALGLSSAKALRAKNLSYLIFSKNGQKADHAYVEVHFKNLGAFPVEDEEVVISRKVSKDGRSIFKINGQVVRERDLKDFLAKAGIYETAYNVVYQGDIVKFLKMTPVERRKIIEEISGIGEYERKKEKALEELAEVELKIKEIDLILEEISNQLKRLKEEKEKLEKFKELQRIKRETEAKILLKEKEKLLKERERILNELSSLRESLEDITFQIQENEKELNERERLLKEVNEKIMPFKEKVGKFTAEIENAERSIKEKERELKESENRVKNLEELINNLLSDKENLEREVGTLQLELEKLKEEYKSLKEVEREKLRELEEEEERLKITFDEVKKLEEEKEKLTEKLNSLNKEKQELEIQRANLKNKIERIKEDINKLISEREEKIKEIKEKEQEIKRLKAIKKKEEEELRNLTQELNIYEKRLSEVRKKLEEVLKEKGAIEREVRSFSDVSDVFKDIKGVYGSVSELIRVKNPEHITAIEVAGGGRLKFIVVEDEEVAKECIQLAKRMNLGRFSFIPLNRVRVEERPLRYPRTKGAVDFAVNLVEYDPKFEKVVKFVFGDTLIVENFESAKAIGIGNYRMVTLEGELFEKSGVITGGAVKPSGELNKRYYEEELQRLNAEEEKLKNEESIIQKKIREIRNLISEKTALLKVSERKIEELSSEGLEQYEEKFKEKLENSKEYLKILEEKLLNVEDKLKELAEEIEYYEEKLNNLKLKEGDIKRHYSREGVEEKRREYSKVRKQVSEIEKSLNEIERELNKKTYELEYLEKEIQEKEREREYLTERIKSLKKEIENLILFKEKTLQEVKEAEVKVYDYIKQKEELEKEILNLKSKLGKLKIKEEELKEKIFEKEKNLKVLEEKIENLNEELKEYEDLKLGADEESIPKLKEKLKRVTEEIQKLGSVNFRAEEDYAEELKRFNDYKEKQQKLKEESKAIKKLIEETENKKRKVFLEAFNQINKSLKRIFSFLSPGGKAQMFLDNPEDPFSGGVQLTVKPRGKDVQYLEAMSGGEKTLAALSLIFALQEYKPSPFYYFDEVDAHLDEVNAKKVGELIREKSKEAQFIVVTLREVVTSFADKIVGVSARGGISEVFFLKNEGLEEIIKEA.

37–44 (PNGAGKSN) provides a ligand contact to ATP. Positions 167-499 (SGIGEYERKK…AIEREVRSFS (333 aa)) form a coiled coil. The SMC hinge domain maps to 509 to 624 (KGVYGSVSEL…VENFESAKAI (116 aa)). Residues 654 to 1001 (GELNKRYYEE…EETENKKRKV (348 aa)) are a coiled coil.

This sequence belongs to the SMC family. In terms of assembly, homodimer.

The protein resides in the cytoplasm. In terms of biological role, required for chromosome condensation and partitioning. The polypeptide is Chromosome partition protein Smc (Aquifex aeolicus (strain VF5)).